The primary structure comprises 246 residues: Proteasome subunit beta type-4 (246 aa).

Residues 1-23 (MTTFSVPIDNGDSMKIAEEESQR) constitute a propeptide that is removed on maturation. Thr24 (nucleophile) is an active-site residue.

The protein belongs to the peptidase T1B family. Component of the 20S core complex of the 26S proteasome. The 26S proteasome is composed of a core protease (CP), known as the 20S proteasome, capped at one or both ends by the 19S regulatory particle (RP/PA700). The 20S proteasome core is composed of 28 subunits that are arranged in four stacked rings, resulting in a barrel-shaped structure. The two end rings are each formed by seven alpha subunits, and the two central rings are each formed by seven beta subunits. The catalytic chamber with the active sites is on the inside of the barrel. As to expression, ubiquitous low levels, higher expression in siliques and flowers.

It localises to the cytoplasm. Its subcellular location is the nucleus. Non-catalytic component of the proteasome, a multicatalytic proteinase complex which is characterized by its ability to cleave peptides with Arg, Phe, Tyr, Leu, and Glu adjacent to the leaving group at neutral or slightly basic pH. The proteasome has an ATP-dependent proteolytic activity. This chain is Proteasome subunit beta type-4 (PBG1), found in Arabidopsis thaliana (Mouse-ear cress).